Consider the following 76-residue polypeptide: Anaredoxin (76 aa).

The HNH domain maps to 24-66; sequence CMVCWEVNSKANGHHLIPYSEGGSADIQNMMTLCPSCHTKYHK.

It belongs to the HNH nuclease family.

In terms of biological role, putative P-450 reductase. This chain is Anaredoxin, found in Nostoc sp. (strain PCC 7120 / SAG 25.82 / UTEX 2576).